The following is a 545-amino-acid chain: Glucose-6-phosphate isomerase (545 aa).

The Proton donor role is filled by Glu-351. Residues His-382 and Lys-510 contribute to the active site.

This sequence belongs to the GPI family.

It is found in the cytoplasm. The enzyme catalyses alpha-D-glucose 6-phosphate = beta-D-fructose 6-phosphate. It functions in the pathway carbohydrate biosynthesis; gluconeogenesis. It participates in carbohydrate degradation; glycolysis; D-glyceraldehyde 3-phosphate and glycerone phosphate from D-glucose: step 2/4. Its function is as follows. Catalyzes the reversible isomerization of glucose-6-phosphate to fructose-6-phosphate. This chain is Glucose-6-phosphate isomerase, found in Shewanella baltica (strain OS223).